Consider the following 215-residue polypeptide: Large ribosomal subunit protein uL4 (215 aa).

Residues 46-72 (TAKSKNRAEVSGGGRKPWAQKGGGRAR) form a disordered region. Positions 56–71 (SGGGRKPWAQKGGGRA) are enriched in gly residues.

The protein belongs to the universal ribosomal protein uL4 family. As to quaternary structure, part of the 50S ribosomal subunit.

One of the primary rRNA binding proteins, this protein initially binds near the 5'-end of the 23S rRNA. It is important during the early stages of 50S assembly. It makes multiple contacts with different domains of the 23S rRNA in the assembled 50S subunit and ribosome. Functionally, forms part of the polypeptide exit tunnel. The polypeptide is Large ribosomal subunit protein uL4 (Helicobacter pylori (strain ATCC 700392 / 26695) (Campylobacter pylori)).